Here is a 614-residue protein sequence, read N- to C-terminus: Leucine-rich repeat and immunoglobulin-like domain-containing nogo receptor-interacting protein 1 (614 aa).

Positions 1–35 are cleaved as a signal peptide; the sequence is MLAGGVRSMPSPLLACWQPILLLVLGSVLSGSATG. Disulfide bonds link Cys-36–Cys-42 and Cys-40–Cys-51. The region spanning 36–65 is the LRRNT domain; sequence CPPRCECSAQDRAVLCHRKRFVAVPEGIPT. At 36-555 the chain is on the extracellular side; that stretch reads CPPRCECSAQ…FDIKTLIIAT (520 aa). 11 LRR repeats span residues 66–87, 90–111, 114–135, 138–159, 162–183, 186–207, 210–231, 258–279, 282–303, 306–327, and 330–351; these read ETRL…EFAS, HLEE…AFNN, NLRT…VFTG, NLTK…MFQD, NLKS…AFSG, SLEQ…ALSH, GLIV…SFKR, NLTS…AVRH, YLRF…MLHE, RLQE…AFRG, and YLRV…VFHS. Asn-138 carries N-linked (GlcNAc...) asparagine glycosylation. Residue Asn-196 is glycosylated (N-linked (GlcNAc...) asparagine). 3 N-linked (GlcNAc...) asparagine glycosylation sites follow: Asn-258, Asn-268, and Asn-287. Residue Asn-335 is glycosylated (N-linked (GlcNAc...) asparagine). Residues 363–417 enclose the LRRCT domain; that stretch reads NPLACDCRLLWVFRRRWRLNFNRQQPTCATPEFVQGKEFKDFPDVLLPNYFTCRR. 3 cysteine pairs are disulfide-bonded: Cys-367/Cys-390, Cys-369/Cys-415, and Cys-440/Cys-491. Residues 405–507 enclose the Ig-like C2-type domain; that stretch reads PDVLLPNYFT…GNDSMPAHLH (103 aa). Asn-486 and Asn-536 each carry an N-linked (GlcNAc...) asparagine glycan. The chain crosses the membrane as a helical span at residues 556-576; the sequence is TMGFISFLGVVLFCLVLLFLW. Residues 577–614 are Cytoplasmic-facing; sequence SRGKGNTKHNIEIEYVPRKSDAGISSADAPRKFNMKMI. Ser-596 carries the phosphoserine modification.

Homotetramer. Forms a ternary complex with RTN4R/NGFR and RTN4R/TNFRSF19. Interacts with NGRF, RTN4R and MYT1L. Post-translationally, N-glycosylated. Contains predominantly high-mannose glycans.

The protein resides in the cell membrane. Its function is as follows. Functional component of the Nogo receptor signaling complex (RTN4R/NGFR) in RhoA activation responsible for some inhibition of axonal regeneration by myelin-associated factors. Is also an important negative regulator of oligodentrocyte differentiation and axonal myelination. Acts in conjunction with RTN4 and RTN4R in regulating neuronal precursor cell motility during cortical development. The chain is Leucine-rich repeat and immunoglobulin-like domain-containing nogo receptor-interacting protein 1 (LINGO1) from Macaca fascicularis (Crab-eating macaque).